Reading from the N-terminus, the 583-residue chain is Aspartate--tRNA ligase (583 aa).

Glu-174 provides a ligand contact to L-aspartate. The aspartate stretch occupies residues 198 to 201 (QITK). Arg-220 contributes to the L-aspartate binding site. Residues 220 to 222 (RDE) and Gln-229 each bind ATP. His-443 contacts L-aspartate. Glu-477 serves as a coordination point for ATP. Arg-484 is an L-aspartate binding site. 529–532 (GLDR) serves as a coordination point for ATP.

The protein belongs to the class-II aminoacyl-tRNA synthetase family. Type 1 subfamily. Homodimer.

It is found in the cytoplasm. The catalysed reaction is tRNA(Asp) + L-aspartate + ATP = L-aspartyl-tRNA(Asp) + AMP + diphosphate. Its function is as follows. Catalyzes the attachment of L-aspartate to tRNA(Asp) in a two-step reaction: L-aspartate is first activated by ATP to form Asp-AMP and then transferred to the acceptor end of tRNA(Asp). The polypeptide is Aspartate--tRNA ligase (Streptococcus thermophilus (strain ATCC BAA-491 / LMD-9)).